A 494-amino-acid chain; its full sequence is MKFLAVLLAAGMLAFLGAVICIIASVPLAASPARALPGGTDNASAASAAGAPGPQRSLSALQGAGGSAGPSVLPGEPAASVFPPPPGPLLSRFLCTPLAAACPSGAEQGDAAGERAELLLLQSTAEQLRQTALQQEARIRADRDTIRELTGKLGRCESGLPRGLQDAGPRRDTMADGAWDSPALLVELENAVRALRDRIERIEQELPARGNLSSSAPAPAVPTALHSKMDELEGQLLAKVLALEKERAALSHGSHQQRQEVEKELDALQGRVAELEHGSSAYSPPDAFKVSIPIRNNYMYARVRKAVPELYAFTACMWLRSRSGGSGQGTPFSYSVPGQANEIVLLEAGLEPMELLINDKVAQLPLSLKDSNWHHICIAWTTRDGLWSAYQDGELRGSGENLAAWHPIKPHGILILGQEQDTLGGRFDATQAFVGDIAQFNLWDHALTPAQVLGIANCTGPLMGNVLPWEDKLVEAFGGAKKAAFDVCKRRAKA.

At 1 to 2 (MK) the chain is on the cytoplasmic side. The helical; Signal-anchor for type II membrane protein transmembrane segment at 3 to 23 (FLAVLLAAGMLAFLGAVICII) threads the bilayer. Over 24–494 (ASVPLAASPA…FDVCKRRAKA (471 aa)) the chain is Extracellular. The disordered stretch occupies residues 37 to 80 (PGGTDNASAASAAGAPGPQRSLSALQGAGGSAGPSVLPGEPAAS). N-linked (GlcNAc...) asparagine glycosylation is present at Asn42. Low complexity-rich tracts occupy residues 43-62 (ASAA…SALQ) and 69-80 (GPSVLPGEPAAS). N-linked (GlcNAc...) asparagine glycosylation occurs at Asn211. Positions 286–488 (DAFKVSIPIR…GAKKAAFDVC (203 aa)) constitute a Pentraxin (PTX) domain. Residues Cys316 and Cys377 are joined by a disulfide bond. Residues Asn341, Glu419, Gln420, Asp421, and Gln431 each contribute to the Ca(2+) site. An N-linked (GlcNAc...) asparagine glycan is attached at Asn457.

Interacts with KLHL2. Heteropentamer with NPTX1 and/or NPTX2. Also binds taipoxin-associated calcium-binding protein 49 (TCBP49/RCN2). Ca(2+) is required as a cofactor. N-glycosylated. In terms of processing, ubiquitinated by a cullin-RING-based BCR (BTB-CUL3-RBX1) E3 ubiquitin-protein ligase complex containing KLHL2. In terms of tissue distribution, brain specific.

It localises to the membrane. Its function is as follows. May be involved in mediating uptake of synaptic material during synapse remodeling or in mediating the synaptic clustering of AMPA glutamate receptors at a subset of excitatory synapses. The chain is Neuronal pentraxin receptor (Nptxr) from Rattus norvegicus (Rat).